A 55-amino-acid chain; its full sequence is Large ribosomal subunit protein bL32 (55 aa).

Residues 1–23 show a composition bias toward basic residues; that stretch reads MAVPKKKTSKAKRDQRRAHWKRK. The tract at residues 1–26 is disordered; it reads MAVPKKKTSKAKRDQRRAHWKRKATI.

Belongs to the bacterial ribosomal protein bL32 family.

In Picosynechococcus sp. (strain ATCC 27264 / PCC 7002 / PR-6) (Agmenellum quadruplicatum), this protein is Large ribosomal subunit protein bL32.